We begin with the raw amino-acid sequence, 371 residues long: MYNESPIIRRKSSRIYVGNVPIGDGAPIAVQSMTNTRTTDVEATVAQIKALEKVGADIVRVSVPTMDAAEAFKFIKQQTNIPLIADIHFDYRIALKVAEYGVDCLRINPGNIGNEERIRSVVECARDKNIPIRIGVNGGSLEKDLMDKYKEPTPEALLESAMRHVDILDRLNFDQFKVSVKASDVFLAVESYRLLAKQIIQPLHLGITEAGGARAGSVKSAVGLGMLLADGIGDTLRISLAADPVEEIKVGFDILKSLRIRSRGINFIACPSCSRQEFDVISTVNELEQRLEDIVTPMDVSIIGCVVNGPGEALVSDIGLTGGNRMSGYYDDGVRQKERFDNNNIVDSLEAKIRAKAAIVASRIPAQDLNK.

Cys270, Cys273, Cys305, and Glu312 together coordinate [4Fe-4S] cluster.

Belongs to the IspG family. Requires [4Fe-4S] cluster as cofactor.

The enzyme catalyses (2E)-4-hydroxy-3-methylbut-2-enyl diphosphate + oxidized [flavodoxin] + H2O + 2 H(+) = 2-C-methyl-D-erythritol 2,4-cyclic diphosphate + reduced [flavodoxin]. It functions in the pathway isoprenoid biosynthesis; isopentenyl diphosphate biosynthesis via DXP pathway; isopentenyl diphosphate from 1-deoxy-D-xylulose 5-phosphate: step 5/6. Its function is as follows. Converts 2C-methyl-D-erythritol 2,4-cyclodiphosphate (ME-2,4cPP) into 1-hydroxy-2-methyl-2-(E)-butenyl 4-diphosphate. This Shewanella halifaxensis (strain HAW-EB4) protein is 4-hydroxy-3-methylbut-2-en-1-yl diphosphate synthase (flavodoxin).